The following is a 1791-amino-acid chain: Protein TIC 214 (1791 aa).

Transmembrane regions (helical) follow at residues 19-39, 68-88, 91-111, 133-153, 176-196, and 227-247; these read IINS…FSIG, FIAG…HLAL, PHTI…WNNH, VFLN…SSML, VGWL…LVWI, and IFSI…PSPI. Positions 1492 to 1511 are disordered; it reads ASQVELESDKENKKNPESAL. The span at 1498-1511 shows a compositional bias: basic and acidic residues; that stretch reads ESDKENKKNPESAL.

Belongs to the TIC214 family. Part of the Tic complex.

It is found in the plastid. The protein localises to the chloroplast inner membrane. In terms of biological role, involved in protein precursor import into chloroplasts. May be part of an intermediate translocation complex acting as a protein-conducting channel at the inner envelope. In Barbarea verna (Land cress), this protein is Protein TIC 214.